The chain runs to 186 residues: GMP synthase [glutamine-hydrolyzing] subunit A (186 aa).

Residues 3 to 186 form the Glutamine amidotransferase type-1 domain; sequence MILIINNHGQ…FENFYDVCRS (184 aa). C77 (nucleophile) is an active-site residue. Active-site residues include H164 and E166.

In terms of assembly, heterodimer composed of a glutamine amidotransferase subunit (A) and a GMP-binding subunit (B).

The catalysed reaction is XMP + L-glutamine + ATP + H2O = GMP + L-glutamate + AMP + diphosphate + 2 H(+). The protein operates within purine metabolism; GMP biosynthesis; GMP from XMP (L-Gln route): step 1/1. Its function is as follows. Catalyzes the synthesis of GMP from XMP. This Methanothermobacter thermautotrophicus (strain ATCC 29096 / DSM 1053 / JCM 10044 / NBRC 100330 / Delta H) (Methanobacterium thermoautotrophicum) protein is GMP synthase [glutamine-hydrolyzing] subunit A.